The chain runs to 228 residues: Ribonuclease 3 (228 aa).

Residues 5–128 enclose the RNase III domain; it reads LNRLMARLGY…IIGAMLLDGG (124 aa). Mg(2+) is bound at residue glutamate 41. Residue aspartate 45 is part of the active site. Mg(2+) is bound by residues aspartate 114 and glutamate 117. Residue glutamate 117 is part of the active site. One can recognise a DRBM domain in the interval 155-225; it reads DAKTRLQEWL…ASLALEWLEQ (71 aa).

Belongs to the ribonuclease III family. In terms of assembly, homodimer. The cofactor is Mg(2+).

The protein localises to the cytoplasm. The enzyme catalyses Endonucleolytic cleavage to 5'-phosphomonoester.. Its function is as follows. Digests double-stranded RNA. Involved in the processing of primary rRNA transcript to yield the immediate precursors to the large and small rRNAs (23S and 16S). Processes some mRNAs, and tRNAs when they are encoded in the rRNA operon. Processes pre-crRNA and tracrRNA of type II CRISPR loci if present in the organism. The protein is Ribonuclease 3 of Alcanivorax borkumensis (strain ATCC 700651 / DSM 11573 / NCIMB 13689 / SK2).